Consider the following 72-residue polypeptide: ATP-dependent Clp protease ATP-binding subunit ClpA homolog (72 aa).

It belongs to the ClpA/ClpB family.

It localises to the plastid. It is found in the chloroplast. In terms of biological role, may interact with a ClpP-like protease involved in degradation of denatured proteins in the chloroplast. This is ATP-dependent Clp protease ATP-binding subunit ClpA homolog from Populus euphratica (Euphrates poplar).